A 285-amino-acid chain; its full sequence is Bifunctional protein FolD (285 aa).

NADP(+) is bound by residues 166–168 (GRS), serine 191, and threonine 232.

Belongs to the tetrahydrofolate dehydrogenase/cyclohydrolase family. In terms of assembly, homodimer.

It carries out the reaction (6R)-5,10-methylene-5,6,7,8-tetrahydrofolate + NADP(+) = (6R)-5,10-methenyltetrahydrofolate + NADPH. It catalyses the reaction (6R)-5,10-methenyltetrahydrofolate + H2O = (6R)-10-formyltetrahydrofolate + H(+). Its pathway is one-carbon metabolism; tetrahydrofolate interconversion. Catalyzes the oxidation of 5,10-methylenetetrahydrofolate to 5,10-methenyltetrahydrofolate and then the hydrolysis of 5,10-methenyltetrahydrofolate to 10-formyltetrahydrofolate. The chain is Bifunctional protein FolD from Chloroflexus aurantiacus (strain ATCC 29366 / DSM 635 / J-10-fl).